A 402-amino-acid polypeptide reads, in one-letter code: 2-pyrone synthase (402 aa).

K60, R63, C169, L272, R274, G310, R312, and A313 together coordinate acetoacetyl-CoA. The active site involves C169.

This sequence belongs to the thiolase-like superfamily. Chalcone/stilbene synthases family. As to expression, expressed in both vegetative and reproductive organs. The expression is strong in the leaf, scape (the inflorescence stem) and corolla (both in the ligule and the unpigmented tube), moderate in the bract and carpel, detectable in the root and pappus but not detectable in the stamen.

It carries out the reaction 2 malonyl-CoA + acetyl-CoA + 2 H(+) = triacetate lactone + 2 CO2 + 3 CoA. In terms of biological role, polyketide synthase, which uses acetyl-CoA and two condensation reactions with malonyl-CoA to form triacetic acid lactone (also called methylpyrone), a precursor of phytoalexin. May participate in insect and pathogen resistance. The sequence is that of 2-pyrone synthase from Gerbera hybrida (Daisy).